Reading from the N-terminus, the 58-residue chain is Ribosome modulation factor (58 aa).

Basic residues predominate over residues 1–14 (MKRQKRDKLTRAHS). A disordered region spans residues 1–25 (MKRQKRDKLTRAHSKGYQAGISGRS).

Belongs to the ribosome modulation factor family.

The protein resides in the cytoplasm. Functionally, during stationary phase, converts 70S ribosomes to an inactive dimeric form (100S ribosomes). The sequence is that of Ribosome modulation factor from Alteromonas naphthalenivorans.